A 92-amino-acid polypeptide reads, in one-letter code: Small ribosomal subunit protein uS19c (92 aa).

Belongs to the universal ribosomal protein uS19 family.

It is found in the plastid. It localises to the chloroplast. Functionally, protein S19 forms a complex with S13 that binds strongly to the 16S ribosomal RNA. The polypeptide is Small ribosomal subunit protein uS19c (rps19) (Chlorella vulgaris (Green alga)).